The primary structure comprises 895 residues: Dystroglycan 1 (895 aa).

The N-terminal stretch at 1–29 (MRMSVGSAVPLPLWGRTFLLLLSVAVTQS) is a signal peptide. A required for laminin recognition region spans residues 30 to 408 (HWPSEPSEAV…SQIRPTMTIP (379 aa)). Residues 49–71 (SMHSALSDLHETVPTVVGIPDGT) are O-glycosylated at one site. A glycan (N-linked (GlcNAc...) asparagine) is linked at asparagine 141. Cysteines 182 and 264 form a disulfide. Residues 316–485 (ATPTPVTAIG…PATRMRTTTS (170 aa)) form a mucin-like domain region. O-linked (Man6P...) threonine glycosylation is found at threonine 317, threonine 319, and threonine 379. Residues 381–500 (TLGPIQPTRV…GEPNQRPELK (120 aa)) are disordered. Positions 393-403 (AGTTVPSQIRP) are enriched in polar residues. Residues 413 to 447 (PSTVTTPPTTTTKKPRVSTPRPATPSTDSSTTTTR) show a composition bias toward low complexity. Residues 463 to 485 (TTKAPITRLETASPATRMRTTTS) are O-glycosylated at seven sites with GalNAc. In terms of domain architecture, Peptidase S72 spans 603-712 (KAPARFKAKL…MSITVTGSGS (110 aa)). 3 N-linked (GlcNAc...) asparagine glycosylation sites follow: asparagine 641, asparagine 649, and asparagine 661. The Extracellular portion of the chain corresponds to 654–749 (SIVVEWTNNT…DPEKSSEDDV (96 aa)). The cysteines at positions 669 and 713 are disulfide-linked. A disordered region spans residues 724–747 (PMRVPSEAPATEVPDRDPEKSSED). The segment covering 736-747 (VPDRDPEKSSED) has biased composition (basic and acidic residues). Residues 750–775 (YLHTVIPAVVVAAILLIAGIIAMICY) traverse the membrane as a helical segment. The short motif at 776–782 (RKKRKGK) is the Nuclear localization signal element. Topologically, residues 776 to 895 (RKKRKGKLTL…YRSPPPYVPP (120 aa)) are cytoplasmic. Threonine 790 carries the phosphothreonine modification. The required for interaction with CAV3 stretch occupies residues 819–895 (LQEEKAPLPP…YRSPPPYVPP (77 aa)). The segment at 823–895 (KAPLPPPEYP…YRSPPPYVPP (73 aa)) is disordered. Residues 832-846 (PNQSMPETTPLNQDT) are compositionally biased toward polar residues. Residues 859–870 (SAPPYQPPPPFT) are compositionally biased toward pro residues. Positions 880 to 895 (PKNMTPYRSPPPYVPP) are required for binding DMD and UTRN. The PPXY motif signature appears at 889 to 892 (PPPY). Tyrosine 892 is subject to Phosphotyrosine; by SRC.

As to quaternary structure, monomer. Heterodimer of alpha- and beta-dystroglycan subunits which are the central components of the dystrophin-glycoprotein complex. This complex then can form a dystrophin-associated glycoprotein complex (DGC) which is composed of three subcomplexes: a cytoplasmic complex comprised of DMD (or UTRN), DTNA and a number of syntrophins, such as SNTB1, SNTB2, SNTG1 and SNTG2, the transmembrane dystroglycan complex, and the sarcoglycan-sarcospan complex. Interacts (via the N-terminal of alphaDAG1) with LARGE1; the interaction enhances laminin binding. Interacts with SGCD. Interacts with AGR2 and AGR3. Interacts (betaDAG1) with DMD; the interaction is inhibited by phosphorylation on the PPXY motif. Interacts (betaDAG1, via its PPXY motif) with UTRN (via its WWW and ZZ domains); the interaction is inhibited by phosphorylation on the PPXY motif. Interacts (betaDAG1, via its phosphorylated PPXY motif) with the SH2 domain-containing proteins, FYN, CSK, NCK and SHC. Interacts (betaDAG1) with CAV3 (via a central WW-like domain); the interaction disrupts the binding of DMD. BetaDAG1 directly interacts with ANK3, but not with ANK2; this interaction does not interfere with DMD-binding and is required for retention at costameres. Identified in a dystroglycan complex that contains at least PRX, DRP2, UTRN, DMD and DAG1. Interacts with POMGNT1. BetaDAG1 interacts with CD93. O-glycosylated. POMGNT1 catalyzes the initial addition of N-acetylglucosamine, giving rise to the GlcNAc(beta1-2)Man(alpha1-)O-Ser/Thr moiety and thus providing the necessary basis for the addition of further carbohydrate moieties. Heavily O-glycosylated comprising of up to two thirds of its mass and the carbohydrate composition differs depending on tissue type. Mucin-type O-glycosylation is important for ligand binding activity. O-mannosylation is found in high abundance in both brain and muscle where the most abundant glycan is Sia-alpha-2-3-Gal-beta-1-4-Glc-NAc-beta-1-2-Man. In muscle, glycosylation on Thr-317, Thr-319 and Thr-379 by a phosphorylated O-mannosyl glycan with the structure 2-(N-acetylamido)-2-deoxygalactosyl-beta-1,3-2-(N-acetylamido)-2-deoxyglucosyl-beta-1,4-6-phosphomannose is mediated by like-acetylglucosaminyltransferase (LARGE1) protein amd is required for laminin binding. O-glycosylated in the N-terminal region with a core 1 or possibly core 8 glycan. The brain form displays a unique glycosylation pattern which is absent in other tissues; this form shows enhanced binding to laminin LAMA5 compared to the skeletal muscle form. In terms of processing, N-glycosylated. Post-translationally, autolytic cleavage produces the alpha and beta subunits. In cutaneous cells, as well as in certain pathological conditions, shedding of beta-dystroglycan can occur releasing a peptide of about 30 kDa. SRC-mediated phosphorylation of the PPXY motif of the beta subunit recruits SH2 domain-containing proteins, but inhibits binding to WWW domain-containing proteins, DMD and UTRN. This phosphorylation also inhibits nuclear entry. As to expression, expressed in brain (at protein level). Expressed in the myelin sheath of peripheral nerves.

The protein localises to the secreted. It localises to the extracellular space. Its subcellular location is the cell membrane. It is found in the cytoplasm. The protein resides in the cytoskeleton. The protein localises to the nucleus. It localises to the nucleoplasm. Its subcellular location is the sarcolemma. It is found in the postsynaptic cell membrane. In terms of biological role, the dystroglycan complex is involved in a number of processes including laminin and basement membrane assembly, sarcolemmal stability, cell survival, peripheral nerve myelination, nodal structure, cell migration, and epithelial polarization. Its function is as follows. Extracellular peripheral glycoprotein that acts as a receptor for extracellular matrix proteins containing laminin-G domains. Receptor for laminin-2 (LAMA2) and agrin in peripheral nerve Schwann cells. Also acts as a receptor for laminin LAMA5. Functionally, transmembrane protein that plays important roles in connecting the extracellular matrix to the cytoskeleton. Acts as a cell adhesion receptor in both muscle and non-muscle tissues. Receptor for both DMD and UTRN and, through these interactions, scaffolds axin to the cytoskeleton. Also functions in cell adhesion-mediated signaling and implicated in cell polarity. The sequence is that of Dystroglycan 1 from Bos taurus (Bovine).